A 564-amino-acid polypeptide reads, in one-letter code: Pumilio homolog 9 (564 aa).

One can recognise a PUM-HD domain in the interval 222–564; the sequence is LEDTVLIGQG…KIFSKTILKK (343 aa). Pumilio repeat units follow at residues 249 to 284, 285 to 320, 321 to 359, 361 to 396, 397 to 432, 433 to 469, 470 to 501, and 502 to 539; these read EIYGSVNLMAKDQIGCRVLQKLVEEGTFHEAKVILL, AIIDHVVELSMDPFGNYIVQKLFDVSDEEQRTLIVS, VLTSNPRELIRICLNTYGTRVVQKMIETVKTKQQIALVK, GLKPGFLALVKDLNGNHVIQSCLQTLGPNDNEFVLE, AATKYCAEIAIHRHGCCVLQCCISNSVGLQRERLVA, EISRNSLHLSQDPFGNYVVQYLIDQQVSAVKLLVQFR, MHYAELATQKFSSHVIEKCLRKYPESRAEIVR, and ELLCVPNFEYLLQDPYANYVIQTALSVTKGPVRAKLVA.

Its subcellular location is the cytoplasm. Sequence-specific RNA-binding protein that regulates translation and mRNA stability by binding the 3'-UTR of target mRNAs. The polypeptide is Pumilio homolog 9 (APUM9) (Arabidopsis thaliana (Mouse-ear cress)).